The sequence spans 339 residues: Ribosomal RNA small subunit methyltransferase C (339 aa).

The protein belongs to the methyltransferase superfamily. RsmC family. In terms of assembly, monomer.

The protein localises to the cytoplasm. The catalysed reaction is guanosine(1207) in 16S rRNA + S-adenosyl-L-methionine = N(2)-methylguanosine(1207) in 16S rRNA + S-adenosyl-L-homocysteine + H(+). In terms of biological role, specifically methylates the guanine in position 1207 of 16S rRNA in the 30S particle. The chain is Ribosomal RNA small subunit methyltransferase C from Photobacterium profundum (strain SS9).